Here is an 88-residue protein sequence, read N- to C-terminus: Arminin 1b (88 aa).

The N-terminal stretch at 1–18 is a signal peptide; sequence MKTVLAFLFLTFIAFTHA. Positions 19–57 are excised as a propeptide; that stretch reads ESYEDVKEEIKNEVEREIFEDLEEESDVLESNVRELNDA. The residue at position 85 (Val85) is a Valine amide.

This sequence belongs to the arminin family. In terms of tissue distribution, expressed in entodermal epithelium along the body column.

The protein localises to the secreted. Its subcellular location is the target cell membrane. Functionally, antimicrobial peptide with a broad-spectrum antimicrobial activity. Keeps its antibacterial activity under a wide range of salt concentrations that mimic physiological conditions of human blood, which is surprising, since Hydra is an obligate freshwater animal with nearly no salt tolerance. Does not affect red blood cells. This chain is Arminin 1b, found in Hydra vulgaris (Hydra).